Here is an 81-residue protein sequence, read N- to C-terminus: MTLFSFFLVILSFYYILFSLLGRNYLIFIYIKIIPTVSYFHFNHHFFKLKFRNAKHIIVYFSRKHNFQHQALFVLYYLYSI.

2 helical membrane-spanning segments follow: residues 1 to 21 (MTLF…FSLL) and 27 to 47 (IFIY…HHFF).

Its subcellular location is the membrane. This is an uncharacterized protein from Saccharomyces cerevisiae (strain ATCC 204508 / S288c) (Baker's yeast).